A 287-amino-acid chain; its full sequence is Acetylglutamate kinase (287 aa).

Substrate contacts are provided by residues 70 to 71, Arg-92, and Asn-184; that span reads GG.

This sequence belongs to the acetylglutamate kinase family. ArgB subfamily.

It is found in the cytoplasm. The catalysed reaction is N-acetyl-L-glutamate + ATP = N-acetyl-L-glutamyl 5-phosphate + ADP. The protein operates within amino-acid biosynthesis; L-arginine biosynthesis; N(2)-acetyl-L-ornithine from L-glutamate: step 2/4. In terms of biological role, catalyzes the ATP-dependent phosphorylation of N-acetyl-L-glutamate. This chain is Acetylglutamate kinase, found in Dinoroseobacter shibae (strain DSM 16493 / NCIMB 14021 / DFL 12).